Consider the following 403-residue polypeptide: Phosphoglycerate kinase (403 aa).

Substrate is bound by residues 21-23 (DFN), arginine 36, 59-62 (HVGR), arginine 119, and arginine 154. ATP contacts are provided by residues lysine 207, glycine 299, glutamate 330, and 357-360 (GGDA).

The protein belongs to the phosphoglycerate kinase family. In terms of assembly, monomer.

The protein resides in the cytoplasm. It catalyses the reaction (2R)-3-phosphoglycerate + ATP = (2R)-3-phospho-glyceroyl phosphate + ADP. Its pathway is carbohydrate degradation; glycolysis; pyruvate from D-glyceraldehyde 3-phosphate: step 2/5. The polypeptide is Phosphoglycerate kinase (pgk) (Chlamydia trachomatis serovar D (strain ATCC VR-885 / DSM 19411 / UW-3/Cx)).